A 446-amino-acid chain; its full sequence is MKEIEKLKEEYPLLNKLIEIEEVFWVNPNMEKYETAIKDSPLSEENVKDAEERLKRFASYIAKVFPETKDTGGIIESPLVKIPSMKQSLEKNYEQPILGELLLKCDSHLPISGSIKARGGIYEVLKHAEQLALQQGMLTEEDDYSILDSDTCREFFATYSIAVGSTGNLGLSIGIMSAKLGFNVTVHMSADAKQWKKDLLRSKGVNVIEYEADYSKAVEEGRRQADADPSCYFVDDENSHDLFLGYAVAASRLQKQLEELEIIVDEEHPLFVYLPCGVGGGPGGVAFGLKLLYKDNVHCFFAEPTHSPCMLIGLMTGLHDKIAVQDIGIDNVTDADGLAVGRPSGFVGKTMEPFLSGNYTVSDEELYRLLKELADTENIYLEPSALAGMIGPVKVCKEDAYLQEQQLMEKMKKGTHIVWGTGGSMVPEDVMNGYYKTGEALTILEK.

Lys-116 carries the N6-(pyridoxal phosphate)lysine modification.

The protein belongs to the serine/threonine dehydratase family. DsdA subfamily. Pyridoxal 5'-phosphate is required as a cofactor.

The enzyme catalyses D-serine = pyruvate + NH4(+). This is Probable D-serine dehydratase from Bacillus anthracis (strain CDC 684 / NRRL 3495).